The following is a 326-amino-acid chain: Meso-diaminopimelate D-dehydrogenase (326 aa).

NADP(+) is bound by residues 11–14 (YGNL), 35–37 (TRR), 69–72 (CGGS), 92–94 (SFD), and 121–125 (VGWDP). Substrate-binding positions include Asp94, Asp124, Trp148, 154–155 (QG), Thr173, Arg199, His249, and Asn276.

It belongs to the diaminopimelate dehydrogenase family. In terms of assembly, homodimer.

It carries out the reaction meso-2,6-diaminopimelate + NADP(+) + H2O = (S)-2-amino-6-oxoheptanedioate + NH4(+) + NADPH + H(+). The protein operates within amino-acid biosynthesis; L-lysine biosynthesis via DAP pathway; DL-2,6-diaminopimelate from (S)-tetrahydrodipicolinate: step 1/1. Its activity is regulated as follows. L,L-2,6-diaminopimelate, D,D-2,6-diaminopimelate and meso-2,5-diaminoadipate competitively inhibit the oxidation of meso-2,6-diaminopimelate. L-2-amino-6-methylene-pimelate is also a potent competitive inhibitor (5 uM) of this reaction. Glyoxylate inhibits the reductive amination of L-2-amino-6-oxopimelate about 30%. The enzyme is inhibited completely by p-chloromercuribenzoate and HgCl(2) in vitro. In terms of biological role, catalyzes the reversible NADPH-dependent reductive amination of L-2-amino-6-oxopimelate, the acyclic form of L-tetrahydrodipicolinate, to generate the meso compound, D,L-2,6-diaminopimelate. Probably plays a role in lysine biosynthesis. Exhibits a high substrate specificity, since alpha-ketoglutarate, pyruvate, oxaloacetate, glyoxylate, alpha-ketobutyrate, alpha-ketovalerate, alpha-ketocaproate, alpha-ketoisocaproate, alpha-ketoisovalerate, and phenylpyruvate are not substrates for the reductive amination reaction, and L,L-2,6-diaminopimelate, D,D-2,6-diaminopimelate, DL-alpha-aminopimelate, meso- and DL-2,5-diaminoadipate, L-djenkolate, L-cystine, L-lysine, S-(beta-aminoethy1)-L-homocysteine, L-ornithine, L-arginine, L-alpha,gamma-diaminobutyrate, L-histidine, L-phenylalanine, L-tyrosine, L-glutamate, L-aspartate, L-leucine, L-valine, L-methionine, L-serine, L-alanine, L-alpha-aminobutyrate, D-lysine, D-glutamate, D-leucine, D-alanine, D-phenylalanine, epsilon-aminocaproate, 7-aminoheptanoate, and 8-aminooctanoate are not substrates for the oxidative deamination reaction. Cannot use NAD(+) or NAD(+) analogs instead of NADP(+) for the oxidative deamination reaction. The chain is Meso-diaminopimelate D-dehydrogenase (dapdh) from Lysinibacillus sphaericus (Bacillus sphaericus).